The primary structure comprises 472 residues: MLGTVKMEGHETSDWNSYYADTQEAYSSVPVSNMNSGLGSMNSMNTYMTMNTMTTSGNMTPASFNMSYANPGLGAGLSPGAVAGMPGGSAGAMNSMTAAGVTAMGTALSPSGMGAMGAQQAASMNGLGPYAAAMNPCMSPMAYAPSNLGRSRAGGGGDAKTFKRSYPHAKPPYSYISLITMAIQQAPSKMLTLSEIYQWIMDLFPYYRQNQQRWQNSIRHSLSFNDCFVKVARSPDKPGKGSYWTLHPDSGNMFENGCYLRRQKRFKCEKQPGAGGGGGSGSGGSGAKGGPESRKDPSGASNPSADSPLHRGVHGKTGQLEGAPAPGPAASPQTLDHSGATATGGASELKTPASSTAPPISSGPGALASVPASHPAHGLAPHESQLHLKGDPHYSFNHPFSINNLMSSSEQQHKLDFKAYEQALQYSPYGSTLPASLPLGSASVTTRSPIEPSALEPAYYQGVYSRPVLNTS.

The fork-head DNA-binding region spans 169 to 260 (AKPPYSYISL…GNMFENGCYL (92 aa)). The interval 269–392 (EKQPGAGGGG…ESQLHLKGDP (124 aa)) is disordered. Residues 273 to 289 (GAGGGGGSGSGGSGAKG) are compositionally biased toward gly residues. A phosphoserine mark is found at serine 307 and serine 331. 2 stretches are compositionally biased toward low complexity: residues 322–332 (GAPAPGPAASP) and 351–366 (TPAS…GPGA).

As to quaternary structure, binds DNA as a monomer. Interacts with FOXA2. Interacts with NKX2-1. Interacts with HDAC7. Interacts with the histone H3-H4 heterodimer. Associates with nucleosomes containing histone H2A. Interacts with AR. Interacts with NR0B2. As to expression, highly expressed in prostate and ESR1-positive breast tumors. Overexpressed in esophageal and lung adenocarcinomas.

The protein resides in the nucleus. In terms of biological role, transcription factor that is involved in embryonic development, establishment of tissue-specific gene expression and regulation of gene expression in differentiated tissues. Is thought to act as a 'pioneer' factor opening the compacted chromatin for other proteins through interactions with nucleosomal core histones and thereby replacing linker histones at target enhancer and/or promoter sites. Binds DNA with the consensus sequence 5'-[AC]A[AT]T[AG]TT[GT][AG][CT]T[CT]-3'. Proposed to play a role in translating the epigenetic signatures into cell type-specific enhancer-driven transcriptional programs. Its differential recruitment to chromatin is dependent on distribution of histone H3 methylated at 'Lys-5' (H3K4me2) in estrogen-regulated genes. Involved in the development of multiple endoderm-derived organ systems such as liver, pancreas, lung and prostate; FOXA1 and FOXA2 seem to have at least in part redundant roles. Modulates the transcriptional activity of nuclear hormone receptors. Is involved in ESR1-mediated transcription; required for ESR1 binding to the NKX2-1 promoter in breast cancer cells; binds to the RPRM promoter and is required for the estrogen-induced repression of RPRM. Involved in regulation of apoptosis by inhibiting the expression of BCL2. Involved in cell cycle regulation by activating expression of CDKN1B, alone or in conjunction with BRCA1. Originally described as a transcription activator for a number of liver genes such as AFP, albumin, tyrosine aminotransferase, PEPCK, etc. Interacts with the cis-acting regulatory regions of these genes. Involved in glucose homeostasis. The chain is Hepatocyte nuclear factor 3-alpha (FOXA1) from Homo sapiens (Human).